The chain runs to 240 residues: Uridylate kinase (240 aa).

12–15 (KLSG) provides a ligand contact to ATP. Positions 20–25 (GDKGFG) are involved in allosteric activation by GTP. Gly-54 contacts UMP. Residues Gly-55 and Arg-59 each coordinate ATP. Residues Asp-74 and 135-142 (TGSPYFST) contribute to the UMP site. ATP contacts are provided by Asn-163, Tyr-169, and Asp-172.

This sequence belongs to the UMP kinase family. In terms of assembly, homohexamer.

The protein resides in the cytoplasm. It carries out the reaction UMP + ATP = UDP + ADP. It functions in the pathway pyrimidine metabolism; CTP biosynthesis via de novo pathway; UDP from UMP (UMPK route): step 1/1. Its activity is regulated as follows. Allosterically activated by GTP. Inhibited by UTP. Catalyzes the reversible phosphorylation of UMP to UDP. The polypeptide is Uridylate kinase (Levilactobacillus brevis (strain ATCC 367 / BCRC 12310 / CIP 105137 / JCM 1170 / LMG 11437 / NCIMB 947 / NCTC 947) (Lactobacillus brevis)).